The following is a 209-amino-acid chain: NADH-quinone oxidoreductase subunit C (209 aa).

This sequence belongs to the complex I 30 kDa subunit family. NDH-1 is composed of 14 different subunits. Subunits NuoB, C, D, E, F, and G constitute the peripheral sector of the complex.

Its subcellular location is the cell inner membrane. It carries out the reaction a quinone + NADH + 5 H(+)(in) = a quinol + NAD(+) + 4 H(+)(out). In terms of biological role, NDH-1 shuttles electrons from NADH, via FMN and iron-sulfur (Fe-S) centers, to quinones in the respiratory chain. The immediate electron acceptor for the enzyme in this species is believed to be ubiquinone. Couples the redox reaction to proton translocation (for every two electrons transferred, four hydrogen ions are translocated across the cytoplasmic membrane), and thus conserves the redox energy in a proton gradient. The sequence is that of NADH-quinone oxidoreductase subunit C from Xanthobacter autotrophicus (strain ATCC BAA-1158 / Py2).